A 65-amino-acid polypeptide reads, in one-letter code: Large ribosomal subunit protein bL35 (65 aa).

The segment at 1–22 (MPKLKTKSGAAKRFKKTGKGGF) is disordered.

Belongs to the bacterial ribosomal protein bL35 family.

The protein is Large ribosomal subunit protein bL35 of Francisella philomiragia subsp. philomiragia (strain ATCC 25017 / CCUG 19701 / FSC 153 / O#319-036).